Reading from the N-terminus, the 703-residue chain is Pinin (703 aa).

Residue A2 is modified to N-acetylalanine. Residues 2 to 32 adopt a coiled-coil conformation; the sequence is AVAVRTLQEQLEKAKESLKNVDENIRKLTGR. The disordered stretch occupies residues 46–148; that stretch reads ALSGPGGGRG…ETPERPGPIF (103 aa). A Phosphoserine modification is found at S48. An Omega-N-methylarginine modification is found at R54. A phosphoserine mark is found at S58, S66, S96, and S100. Over residues 87 to 100 the composition is skewed to basic and acidic residues; the sequence is GGERRTRRESRQES. A Glycyl lysine isopeptide (Lys-Gly) (interchain with G-Cter in SUMO2) cross-link involves residue K109. 2 positions are modified to phosphoserine: S114 and S115. K121 is covalently cross-linked (Glycyl lysine isopeptide (Lys-Gly) (interchain with G-Cter in SUMO2)). T125 bears the Phosphothreonine mark. Residues K138 and K157 each participate in a glycyl lysine isopeptide (Lys-Gly) (interchain with G-Cter in SUMO2) cross-link. A Glycyl lysine isopeptide (Lys-Gly) (interchain with G-Cter in SUMO1); alternate cross-link involves residue K159. K159 participates in a covalent cross-link: Glycyl lysine isopeptide (Lys-Gly) (interchain with G-Cter in SUMO2); alternate. Positions 165–236 form a coiled coil; the sequence is ATERQKRRQE…HNAKIIKYIR (72 aa). Positions 223 to 285 are sufficient for PSAP complex assembly; sequence EWNEHNAKII…AEQINKMEAR (63 aa). K230 participates in a covalent cross-link: Glycyl lysine isopeptide (Lys-Gly) (interchain with G-Cter in SUMO2). K240 is subject to N6-acetyllysine; alternate. K240 is modified (N6-succinyllysine; alternate). Glycyl lysine isopeptide (Lys-Gly) (interchain with G-Cter in SUMO2) cross-links involve residues K281, K306, and K313. Disordered stretches follow at residues 284-314, 331-394, and 408-703; these read ARPRRQSMKEKEHQVVVRNEEQKSEQEEGKV, RVGT…EEVM, and AEQE…PGQL. Composition is skewed to basic and acidic residues over residues 348–357 and 366–386; these read EIPIVHSDAE and KQEMEVKMEEETEVRESEKQQ. S354 bears the Phosphoserine mark. Residues 354–411 are a coiled coil; that stretch reads SDAEKEQEEEEQKQEMEVKMEEETEVRESEKQQDSQPEEVMDVLEMVESVKNVIAEQE. Glycyl lysine isopeptide (Lys-Gly) (interchain with G-Cter in SUMO2) cross-links involve residues K366 and K372. Residues S382 and S388 each carry the phosphoserine modification. Residues 417-433 show a composition bias toward basic and acidic residues; the sequence is QVERVEPSENEASKELE. 2 positions are modified to phosphoserine: S450 and S457. A compositionally biased stretch (low complexity) spans 479–489; it reads PMAQPQAQSLP. Residues K541 and K549 each participate in a glycyl lysine isopeptide (Lys-Gly) (interchain with G-Cter in SUMO2) cross-link. S565 bears the Phosphoserine mark. A Glycyl lysine isopeptide (Lys-Gly) (interchain with G-Cter in SUMO2) cross-link involves residue K566. Positions 572–588 are enriched in basic residues; sequence RSRSRGRARNRTSKSRS. The span at 589 to 642 shows a compositional bias: low complexity; sequence RSSSSSSSSSSSTSSSSGSSSSSGSSSSRTSSSSSSTSGSSSRDSSSSTTSSSE. The span at 646–664 shows a compositional bias: basic residues; the sequence is RSRGRGHNRDRKHRRSVDR. The segment covering 665–676 has biased composition (basic and acidic residues); sequence KRRDASGLERSH. Phosphoserine occurs at positions 670 and 691.

Belongs to the pinin family. Found in a mRNA splicing-dependent exon junction complex (EJC). Found in a complex with SR proteins. Found in a mRNP complex with RNPS1. Component of the PSAP complex consisting of RNPS1, SAP18 and PNN. Interacts with PNISR, CTBP1, CTBP2, KRT8, KRT18, KRT19, PS1D/PNO40, PPIG, RNPS1, SFRS4 and SRRM2. Identified in the spliceosome C complex.

Its subcellular location is the nucleus speckle. The protein resides in the cell junction. It is found in the desmosome. In terms of biological role, transcriptional activator binding to the E-box 1 core sequence of the E-cadherin promoter gene; the core-binding sequence is 5'CAGGTG-3'. Capable of reversing CTBP1-mediated transcription repression. Auxiliary component of the splicing-dependent multiprotein exon junction complex (EJC) deposited at splice junction on mRNAs. The EJC is a dynamic structure consisting of core proteins and several peripheral nuclear and cytoplasmic associated factors that join the complex only transiently either during EJC assembly or during subsequent mRNA metabolism. Participates in the regulation of alternative pre-mRNA splicing. Associates to spliced mRNA within 60 nt upstream of the 5'-splice sites. Component of the PSAP complex which binds RNA in a sequence-independent manner and is proposed to be recruited to the EJC prior to or during the splicing process and to regulate specific excision of introns in specific transcription subsets. Involved in the establishment and maintenance of epithelia cell-cell adhesion. The chain is Pinin (PNN) from Bos taurus (Bovine).